Here is a 195-residue protein sequence, read N- to C-terminus: Imidazoleglycerol-phosphate dehydratase (195 aa).

This sequence belongs to the imidazoleglycerol-phosphate dehydratase family.

The protein resides in the cytoplasm. It catalyses the reaction D-erythro-1-(imidazol-4-yl)glycerol 3-phosphate = 3-(imidazol-4-yl)-2-oxopropyl phosphate + H2O. It functions in the pathway amino-acid biosynthesis; L-histidine biosynthesis; L-histidine from 5-phospho-alpha-D-ribose 1-diphosphate: step 6/9. The sequence is that of Imidazoleglycerol-phosphate dehydratase from Aromatoleum aromaticum (strain DSM 19018 / LMG 30748 / EbN1) (Azoarcus sp. (strain EbN1)).